A 560-amino-acid polypeptide reads, in one-letter code: Terminal uridylyltransferase Tailor (560 aa).

The interval 169-197 (EQHPKPNPNNQPVQPHPTHQTKQEKKQAQ) is disordered. Residues 176–188 (PNNQPVQPHPTHQ) are compositionally biased toward low complexity. Mg(2+) is bound by residues D278 and D280. A PAP-associated domain is found at 455 to 522 (LRNFFAYFAK…VVQDPIQLNH (68 aa)).

The cofactor is Mg(2+).

It is found in the cytoplasm. It catalyses the reaction RNA(n) + UTP = RNA(n)-3'-uridine ribonucleotide + diphosphate. Its function is as follows. Uridylyltransferase which mediates terminal uridylation of miRNAs, leading to their degradation. Has high specificity for splicing-derived miRNAs (mirtrons) and other miRNA substrates containing a 3'-G terminal nucleotide. Appears to be a major suppressor of mirtron biogenesis. This is Terminal uridylyltransferase Tailor from Drosophila melanogaster (Fruit fly).